A 208-amino-acid chain; its full sequence is Glycerol-3-phosphate acyltransferase (208 aa).

The next 6 helical transmembrane spans lie at 7 to 27, 63 to 83, 86 to 106, 123 to 143, 149 to 169, and 170 to 190; these read PNIHFYLLAYFIGGIPFGYLL, MMAALTMLLDALKGALVILVA, AGMSVETQWAIAVLAVVGHCF, GVMAVMLPLEAAIGLVVWLVV, ISSLSSLLGLGALLISSFLIH, and PEIPEIGTHAPLLIIAFVIFY.

This sequence belongs to the PlsY family. In terms of assembly, probably interacts with PlsX.

The protein localises to the cell inner membrane. The catalysed reaction is an acyl phosphate + sn-glycerol 3-phosphate = a 1-acyl-sn-glycero-3-phosphate + phosphate. It functions in the pathway lipid metabolism; phospholipid metabolism. In terms of biological role, catalyzes the transfer of an acyl group from acyl-phosphate (acyl-PO(4)) to glycerol-3-phosphate (G3P) to form lysophosphatidic acid (LPA). This enzyme utilizes acyl-phosphate as fatty acyl donor, but not acyl-CoA or acyl-ACP. This is Glycerol-3-phosphate acyltransferase from Wolinella succinogenes (strain ATCC 29543 / DSM 1740 / CCUG 13145 / JCM 31913 / LMG 7466 / NCTC 11488 / FDC 602W) (Vibrio succinogenes).